Reading from the N-terminus, the 449-residue chain is Xylose isomerase (449 aa).

Catalysis depends on residues His103 and Asp106. Mg(2+) is bound by residues Glu234, Glu270, His273, Asp298, Asp309, Asp311, and Asp342.

Belongs to the xylose isomerase family. As to quaternary structure, homotetramer. Mg(2+) serves as cofactor.

It is found in the cytoplasm. It catalyses the reaction alpha-D-xylose = alpha-D-xylulofuranose. In Levilactobacillus brevis (strain ATCC 367 / BCRC 12310 / CIP 105137 / JCM 1170 / LMG 11437 / NCIMB 947 / NCTC 947) (Lactobacillus brevis), this protein is Xylose isomerase.